A 367-amino-acid polypeptide reads, in one-letter code: 2-aminoethylphosphonate--pyruvate transaminase (367 aa).

The residue at position 194 (Lys-194) is an N6-(pyridoxal phosphate)lysine.

Belongs to the class-V pyridoxal-phosphate-dependent aminotransferase family. PhnW subfamily. Homodimer. The cofactor is pyridoxal 5'-phosphate.

The catalysed reaction is (2-aminoethyl)phosphonate + pyruvate = phosphonoacetaldehyde + L-alanine. In terms of biological role, involved in phosphonate degradation. The chain is 2-aminoethylphosphonate--pyruvate transaminase from Salmonella paratyphi A (strain ATCC 9150 / SARB42).